The following is a 134-amino-acid chain: FK506-binding protein 2 (134 aa).

The first 19 residues, 1 to 19 (MRILLLSALFLSLTTLVLS), serve as a signal peptide directing secretion. Residues 39 to 127 (GDTVHMHYRG…IFETELVQIE (89 aa)) enclose the PPIase FKBP-type domain. The Prevents secretion from ER motif lies at 131-134 (NDEL).

It belongs to the FKBP-type PPIase family. FKBP2 subfamily.

Its subcellular location is the endoplasmic reticulum. It carries out the reaction [protein]-peptidylproline (omega=180) = [protein]-peptidylproline (omega=0). Inhibited by both FK506 and rapamycin. Its function is as follows. PPIases accelerate the folding of proteins. It catalyzes the cis-trans isomerization of proline imidic peptide bonds in oligopeptides. The protein is FK506-binding protein 2 (fpr2) of Aspergillus fumigatus (strain ATCC MYA-4609 / CBS 101355 / FGSC A1100 / Af293) (Neosartorya fumigata).